A 210-amino-acid polypeptide reads, in one-letter code: DNA-directed RNA polymerase subunit 5-like protein 1 (210 aa).

Belongs to the archaeal Rpo5/eukaryotic RPB5 RNA polymerase subunit family.

The protein resides in the nucleus. This is DNA-directed RNA polymerase subunit 5-like protein 1 (NRPB5L1) from Arabidopsis thaliana (Mouse-ear cress).